The following is a 21-amino-acid chain: Brevinin-2-related peptide (21 aa).

At Leu21 the chain carries Leucine amide.

As to expression, expressed by the skin glands.

It localises to the secreted. Functionally, antimicrobial peptide with activity against Gram-negative and Gram-positive bacteria (MIC=13 uM against E.coli, MIC=25 uM against S.aureus) and fungi (MIC=25 uM against C.albicans). Also shows hemolytic activity (HC(50)=50 uM). In vitro, shows moderate inhibitory activity against HIV. This Lithobates septentrionalis (Mink frog) protein is Brevinin-2-related peptide.